A 354-amino-acid chain; its full sequence is Stearoyl-CoA desaturase (354 aa).

The interval 1–28 (MPGHLLQEEMTSSYTTTTTTITEPPSES) is disordered. Residues 1–67 (MPGHLLQEEM…EGPPPKLEYV (67 aa)) lie on the Cytoplasmic side of the membrane. A compositionally biased stretch (low complexity) spans 8–28 (EEMTSSYTTTTTTITEPPSES). The helical transmembrane segment at 68 to 88 (WRNIILMALLHLGALYGLVLV) threads the bilayer. Asn-70 is a binding site for substrate. At 89–92 (PSSK) the chain is on the lumenal side. Residues 93–113 (VYTLLWAFVYYVISIEGIGAG) form a helical membrane-spanning segment. At 114-212 (VHRLWSHRTY…EKLVMFQRRY (99 aa)) the chain is on the cytoplasmic side. Fe cation-binding residues include His-115 and His-120. Positions 115–120 (HRLWSH) match the Histidine box-1 motif. Residues Asn-143, Arg-150, and Asp-151 each contribute to the substrate site. 3 residues coordinate Fe cation: His-152, His-155, and His-156. Residues 152–156 (HRAHH) carry the Histidine box-2 motif. Positions 183 and 184 each coordinate substrate. Residue Ser-198 is modified to Phosphoserine. Residues 213–232 (YKPAILLMCFILPTFVPWYF) traverse the membrane as a helical segment. Topologically, residues 233–236 (WGEA) are lumenal. Residues 237-258 (FVNSLCVSTFLRYTLVLNATWL) traverse the membrane as a helical segment. Trp-257 lines the substrate pocket. The Cytoplasmic segment spans residues 259-354 (VNSAAHLYGY…RTGDGSCKSG (96 aa)). His-264, His-293, His-296, and His-297 together coordinate Fe cation. A Histidine box-3 motif is present at residues 293-297 (HNYHH).

It belongs to the fatty acid desaturase type 1 family. Fe(2+) is required as a cofactor.

The protein resides in the endoplasmic reticulum membrane. It catalyses the reaction octadecanoyl-CoA + 2 Fe(II)-[cytochrome b5] + O2 + 2 H(+) = (9Z)-octadecenoyl-CoA + 2 Fe(III)-[cytochrome b5] + 2 H2O. It carries out the reaction hexadecanoyl-CoA + 2 Fe(II)-[cytochrome b5] + O2 + 2 H(+) = (9Z)-hexadecenoyl-CoA + 2 Fe(III)-[cytochrome b5] + 2 H2O. Stearoyl-CoA desaturase that utilizes O(2) and electrons from reduced cytochrome b5 to introduce the first double bond into saturated fatty acyl-CoA substrates. Catalyzes the insertion of a cis double bond at the delta-9 position into fatty acyl-CoA substrates including palmitoyl-CoA and stearoyl-CoA. Gives rise to a mixture of 16:1 and 18:1 unsaturated fatty acids. Plays an important role in lipid biosynthesis. Plays an important role in regulating the expression of genes that are involved in lipogenesis and in regulating mitochondrial fatty acid oxidation. Plays an important role in body energy homeostasis. Contributes to the biosynthesis of membrane phospholipids, cholesterol esters and triglycerides. This chain is Stearoyl-CoA desaturase (SCD), found in Mesocricetus auratus (Golden hamster).